The following is a 1048-amino-acid chain: Self-sufficient cytochrome P450 monooxygenase CYP505E4 (1048 aa).

Position 405 (Cys-405) interacts with heme. The Flavodoxin-like domain occupies 499–640 (VSFFYGSNSG…DLEVWEETNL (142 aa)). FMN contacts are provided by residues 505–509 (SNSGT) and 584–616 (VFGC…TRLA). The region spanning 678–906 (RDLIEAKVTA…RPAKDAFHLP (229 aa)) is the FAD-binding FR-type domain.

The protein in the N-terminal section; belongs to the cytochrome P450 family. FAD is required as a cofactor. Requires FMN as cofactor. Heme serves as cofactor.

It carries out the reaction 2 oxidized [cytochrome P450] + NADPH = 2 reduced [cytochrome P450] + NADP(+) + H(+). The catalysed reaction is an organic molecule + reduced [NADPH--hemoprotein reductase] + O2 = an alcohol + oxidized [NADPH--hemoprotein reductase] + H2O + H(+). The enzyme catalyses dodecanoate + reduced [NADPH--hemoprotein reductase] + O2 = 5-hydroxydodecanoate + oxidized [NADPH--hemoprotein reductase] + H2O + H(+). It catalyses the reaction tetradecanoate + reduced [NADPH--hemoprotein reductase] + O2 = 7-hydroxytetradecanoate + oxidized [NADPH--hemoprotein reductase] + H2O + H(+). It carries out the reaction dodecan-1-ol + reduced [NADPH--hemoprotein reductase] + O2 = 1,5-dodecanediol + oxidized [NADPH--hemoprotein reductase] + H2O + H(+). The catalysed reaction is dodecan-1-ol + reduced [NADPH--hemoprotein reductase] + O2 = 1,4-dodecanediol + oxidized [NADPH--hemoprotein reductase] + H2O + H(+). The enzyme catalyses dodecan-1-ol + reduced [NADPH--hemoprotein reductase] + O2 = 1,6-dodecanediol + oxidized [NADPH--hemoprotein reductase] + H2O + H(+). Functionally, self-sufficient cytochrome P450 monooxygenase that catalyzes the regioselective in-chain hydroxylation of alkanes, fatty alcohols, and fatty acids at the omega-7 position. Performs hydroxylation of C10-C16 n-alkanes and C12 and C14 fatty alcohols; and thereby enables the one step biocatalytic synthesis of rare alcohols such as 5-dodecanol and 7-tetradecanol. Converts 1-dodecanol into 1,5-dodecanediol as major product with very little sub-terminally hydroxylated products with the 1,4-dodecanediol and 1,6-dodecanediol more abundant. Converts dodecanoic acid to 5-hydroxydodecanoic acid which can be further converted into delta-dodecalactone by lactonization of the 5-hydroxy acid at low pH. Also gives sub-terminal hydroxylation of dodecanoic acid with 9-hydroxydodecanoic acid being the second most abundant product. The sequence is that of Self-sufficient cytochrome P450 monooxygenase CYP505E4 from Penicillium expansum (Blue mold rot fungus).